We begin with the raw amino-acid sequence, 209 residues long: Thymidylate kinase (209 aa).

Residue 10–17 coordinates ATP; it reads GLEGAGKS.

Belongs to the thymidylate kinase family.

The enzyme catalyses dTMP + ATP = dTDP + ADP. Phosphorylation of dTMP to form dTDP in both de novo and salvage pathways of dTTP synthesis. The sequence is that of Thymidylate kinase from Photobacterium profundum (strain SS9).